Reading from the N-terminus, the 332-residue chain is Ketol-acid reductoisomerase (NADP(+)) (332 aa).

The KARI N-terminal Rossmann domain maps to 2-182 (AKVYYDEDAS…GCTRAGLIET (181 aa)). NADP(+)-binding positions include 25-28 (YGSQ), Ser51, Ser53, and 83-86 (DTIQ). Residue His108 is part of the active site. NADP(+) is bound at residue Gly134. A KARI C-terminal knotted domain is found at 183–327 (TFKEETETDL…KELRKMMPWL (145 aa)). Mg(2+) is bound by residues Asp191, Glu195, Glu227, and Glu231. Position 252 (Ser252) interacts with substrate.

It belongs to the ketol-acid reductoisomerase family. Mg(2+) serves as cofactor.

The catalysed reaction is (2R)-2,3-dihydroxy-3-methylbutanoate + NADP(+) = (2S)-2-acetolactate + NADPH + H(+). The enzyme catalyses (2R,3R)-2,3-dihydroxy-3-methylpentanoate + NADP(+) = (S)-2-ethyl-2-hydroxy-3-oxobutanoate + NADPH + H(+). It participates in amino-acid biosynthesis; L-isoleucine biosynthesis; L-isoleucine from 2-oxobutanoate: step 2/4. The protein operates within amino-acid biosynthesis; L-valine biosynthesis; L-valine from pyruvate: step 2/4. Functionally, involved in the biosynthesis of branched-chain amino acids (BCAA). Catalyzes an alkyl-migration followed by a ketol-acid reduction of (S)-2-acetolactate (S2AL) to yield (R)-2,3-dihydroxy-isovalerate. In the isomerase reaction, S2AL is rearranged via a Mg-dependent methyl migration to produce 3-hydroxy-3-methyl-2-ketobutyrate (HMKB). In the reductase reaction, this 2-ketoacid undergoes a metal-dependent reduction by NADPH to yield (R)-2,3-dihydroxy-isovalerate. This Persephonella marina (strain DSM 14350 / EX-H1) protein is Ketol-acid reductoisomerase (NADP(+)).